The sequence spans 267 residues: Mannose-specific lectin 1 (267 aa).

The signal sequence occupies residues 1–26 (MAKLLLFLLPAILGLLVPPRSWSAVA). Bulb-type lectin domains are found at residues 29–134 (TNYL…PSVP) and 148–255 (NNLL…PQAK). Beta-D-mannose-binding positions include 54–58 (QDDCN), Tyr62, Trp66, Gln67, 173–177 (QGDCN), Tyr181, and 185–188 (YGWQ). Positions 54-62 (QDDCNLVLY) match the Carbohydrate-binding motif 1 motif. 2 disulfides stabilise this stretch: Cys57–Cys77 and Cys176–Cys198. The Carbohydrate-binding motif 2 signature appears at 173–181 (QGDCNLVLY).

Forms heterotetramer of 2 chains 1 and 2 chains 2 arranged as a dimer of chain 1 and chain 2 heterodimers.

It is found in the secreted. Functionally, mannose-specific lectin. Shows agglutinating activity towards erythrocytes from rabbit. The sequence is that of Mannose-specific lectin 1 from Colocasia esculenta (Wild taro).